The primary structure comprises 167 residues: Probable phospholipid hydroperoxide glutathione peroxidase (167 aa).

C41 is an active-site residue.

It belongs to the glutathione peroxidase family.

Its subcellular location is the cytoplasm. The enzyme catalyses a hydroperoxy polyunsaturated fatty acid + 2 glutathione = a hydroxy polyunsaturated fatty acid + glutathione disulfide + H2O. Its function is as follows. Protects cells and enzymes from oxidative damage, by catalyzing the reduction of hydrogen peroxide, lipid peroxides and organic hydroperoxide, by glutathione. The polypeptide is Probable phospholipid hydroperoxide glutathione peroxidase (CSA) (Citrus sinensis (Sweet orange)).